The chain runs to 636 residues: Capsid vertex component 2 (636 aa).

Positions 1–48 (MSLLHTFWRLPVAVFFEPHEENVLRCPERVLRRLLEDAAVAMRGGGWR) are interaction with major capsid protein/MCP. A disordered region spans residues 97–125 (DEGPSPRTLLQPPCRPRSSSPGTGVAGAS).

This sequence belongs to the herpesviridae CVC2 protein family. Heterodimerizes with CVC1. Interacts with major capsid protein/MCP and triplex capsid protein 1/TRX1 at the pentamer vertices. Interacts with the large tegument protein/LTP.

The protein resides in the virion. It localises to the host nucleus. Its function is as follows. Capsid vertex-specific component that plays a role during viral DNA encapsidation, assuring correct genome cleavage and presumably stabilizing capsids that contain full-length viral genomes. Participates in the interaction between the capsid and the tegument through interaction with the large tegument protein/LTP. The protein is Capsid vertex component 2 of Homo sapiens (Human).